A 364-amino-acid chain; its full sequence is Aminomethyltransferase (364 aa).

This sequence belongs to the GcvT family. As to quaternary structure, the glycine cleavage system is composed of four proteins: P, T, L and H.

It carries out the reaction N(6)-[(R)-S(8)-aminomethyldihydrolipoyl]-L-lysyl-[protein] + (6S)-5,6,7,8-tetrahydrofolate = N(6)-[(R)-dihydrolipoyl]-L-lysyl-[protein] + (6R)-5,10-methylene-5,6,7,8-tetrahydrofolate + NH4(+). In terms of biological role, the glycine cleavage system catalyzes the degradation of glycine. This chain is Aminomethyltransferase, found in Shigella flexneri serotype 5b (strain 8401).